A 20-amino-acid polypeptide reads, in one-letter code: Citrate synthase (20 aa).

This sequence belongs to the citrate synthase family. In terms of assembly, homohexamer.

The catalysed reaction is oxaloacetate + acetyl-CoA + H2O = citrate + CoA + H(+). Its pathway is carbohydrate metabolism; tricarboxylic acid cycle; isocitrate from oxaloacetate: step 1/2. Allosterically inhibited by NADH. This chain is Citrate synthase (gltA), found in Streptomyces hygroscopicus.